The following is a 270-amino-acid chain: uncharacterized protein (270 aa).

This sequence belongs to the GSP E family.

This is an uncharacterized protein from Methanocaldococcus jannaschii (strain ATCC 43067 / DSM 2661 / JAL-1 / JCM 10045 / NBRC 100440) (Methanococcus jannaschii).